The following is a 544-amino-acid chain: Chaperonin GroEL 1 (544 aa).

Residues 30-33, 87-91, glycine 415, 480-482, and aspartate 496 each bind ATP; these read TLGP, DGTTT, and NAA.

Belongs to the chaperonin (HSP60) family. In terms of assembly, forms a cylinder of 14 subunits composed of two heptameric rings stacked back-to-back. Interacts with the co-chaperonin GroES.

The protein localises to the cytoplasm. The catalysed reaction is ATP + H2O + a folded polypeptide = ADP + phosphate + an unfolded polypeptide.. Functionally, together with its co-chaperonin GroES, plays an essential role in assisting protein folding. The GroEL-GroES system forms a nano-cage that allows encapsulation of the non-native substrate proteins and provides a physical environment optimized to promote and accelerate protein folding. The sequence is that of Chaperonin GroEL 1 from Polaromonas naphthalenivorans (strain CJ2).